The chain runs to 523 residues: GMP synthase [glutamine-hydrolyzing] (523 aa).

Residues 8–205 (RILILDFGSQ…IRELCECEAL (198 aa)) enclose the Glutamine amidotransferase type-1 domain. The Nucleophile role is filled by Cys-85. Catalysis depends on residues His-179 and Glu-181. The GMPS ATP-PPase domain maps to 206–398 (WTPSNIISDA…LGLPYDMVYR (193 aa)). 233-239 (SGGVDSS) contributes to the ATP binding site.

As to quaternary structure, homodimer.

The enzyme catalyses XMP + L-glutamine + ATP + H2O = GMP + L-glutamate + AMP + diphosphate + 2 H(+). It participates in purine metabolism; GMP biosynthesis; GMP from XMP (L-Gln route): step 1/1. Catalyzes the synthesis of GMP from XMP. This is GMP synthase [glutamine-hydrolyzing] from Alcanivorax borkumensis (strain ATCC 700651 / DSM 11573 / NCIMB 13689 / SK2).